The primary structure comprises 437 residues: Protein WVD2-like 5 (437 aa).

Disordered regions lie at residues 1 to 22 (MDPE…GGLA), 38 to 210 (TVDT…FSFK), and 254 to 437 (LRKS…AVEH). The span at 41 to 55 (TTSESQNENSANSST) shows a compositional bias: low complexity. The segment covering 58–86 (TIEHVKEAAEGTQVEHVDDSKCMKGEKAQ) has biased composition (basic and acidic residues). Positions 121 to 140 (SNGSVAPNVQTTNPLKSKSF) are enriched in polar residues. Residues 151–167 (GKHDSAPAESADGEKVK) show a composition bias toward basic and acidic residues. At S208 the chain carries Phosphoserine. The segment covering 288 to 297 (KSPKLGRKKT) has biased composition (basic residues). Residues 360–371 (PAPAKAAIIPAK) are compositionally biased toward low complexity. Residues 408-437 (EDSHETVSPRMNEDRADKSIEVSEAVAVEH) are compositionally biased toward basic and acidic residues. S415 is modified (phosphoserine).

This sequence belongs to the TPX2 family. As to expression, expressed in seedlings.

The protein resides in the cytoplasm. It is found in the cytoskeleton. Functionally, microtubule-associated protein (MAP) that regulates the orientation of interphase cortical microtubules. The protein is Protein WVD2-like 5 of Arabidopsis thaliana (Mouse-ear cress).